The sequence spans 291 residues: 4-hydroxy-tetrahydrodipicolinate synthase (291 aa).

Residue threonine 44 participates in pyruvate binding. Catalysis depends on tyrosine 132, which acts as the Proton donor/acceptor. Catalysis depends on lysine 160, which acts as the Schiff-base intermediate with substrate. Isoleucine 202 lines the pyruvate pocket.

This sequence belongs to the DapA family. In terms of assembly, homotetramer; dimer of dimers.

It localises to the cytoplasm. The enzyme catalyses L-aspartate 4-semialdehyde + pyruvate = (2S,4S)-4-hydroxy-2,3,4,5-tetrahydrodipicolinate + H2O + H(+). It functions in the pathway amino-acid biosynthesis; L-lysine biosynthesis via DAP pathway; (S)-tetrahydrodipicolinate from L-aspartate: step 3/4. Functionally, catalyzes the condensation of (S)-aspartate-beta-semialdehyde [(S)-ASA] and pyruvate to 4-hydroxy-tetrahydrodipicolinate (HTPA). The protein is 4-hydroxy-tetrahydrodipicolinate synthase of Roseobacter denitrificans (strain ATCC 33942 / OCh 114) (Erythrobacter sp. (strain OCh 114)).